Here is a 333-residue protein sequence, read N- to C-terminus: Transmembrane protein I329L (333 aa).

An N-terminal signal peptide occupies residues 1–31 (MLRVFIFFVFLGSGLTGRIKPQITCKYFISE). N-linked (GlcNAc...) asparagine; by host glycans are attached at residues Asn32, Asn39, Asn44, Asn76, Asn82, and Asn101. The Extracellular portion of the chain corresponds to 32–239 (NNTWYKYNVT…NTERYKSCYP (208 aa)). Residues 112-133 (ELKFLDLRYNDLQVIEYNILRK) form an LRR repeat. N-linked (GlcNAc...) asparagine; by host glycans are attached at residues Asn181, Asn185, and Asn219. A disulfide bridge connects residues Cys195 and Cys237. Residues 240–260 (LVFISILCSCISFLFLFICLL) form a helical membrane-spanning segment. Residues 261–333 (RSICKKYSCT…EKKVSCSRRK (73 aa)) lie on the Cytoplasmic side of the membrane.

This sequence belongs to the asfivirus I329L family. Highly glycosylated.

The protein resides in the host endoplasmic reticulum membrane. The protein localises to the host Golgi apparatus membrane. Functionally, viral TLR3 homolog that probably prevents TLR3 dimerization and subsequent induction of IFN. Inhibits dsRNA-stimulated activation of NF-kB and IRF3. This is Transmembrane protein I329L from Ornithodoros (relapsing fever ticks).